Reading from the N-terminus, the 416-residue chain is Creatine kinase U-type, mitochondrial (416 aa).

Residues 1 to 39 (MAGPFSRLLSARPGLRLLALAGAGSLAAGFLLRPEPIRA) constitute a mitochondrion transit peptide. The cardiolipin-binding stretch occupies residues 40-63 (ASERRRQYPPSAEYPDLRKHNNCM). Residues 44–131 (RRQYPPSAEY…FDPVIQERHN (88 aa)) enclose the Phosphagen kinase N-terminal domain. At Ser-151 the chain carries Phosphoserine. The 243-residue stretch at 158 to 400 (YVLSSRVRTG…NYLIDCERRL (243 aa)) folds into the Phosphagen kinase C-terminal domain. 161–165 (SSRVR) serves as a coordination point for ATP. Position 196 is a phosphoserine (Ser-196). Residue Thr-213 is modified to Phosphothreonine. His-224 contributes to the ATP binding site. Ser-232 is subject to Phosphoserine. ATP is bound by residues Arg-269, Arg-325, and 353 to 358 (RGTGGV). Thr-355 is subject to Phosphothreonine. Ser-365 carries the post-translational modification Phosphoserine. Asp-368 is an ATP binding site.

It belongs to the ATP:guanido phosphotransferase family. Exists as an octamer composed of four MTCK homodimers.

It is found in the mitochondrion inner membrane. It catalyses the reaction creatine + ATP = N-phosphocreatine + ADP + H(+). Its function is as follows. Reversibly catalyzes the transfer of phosphate between ATP and various phosphogens (e.g. creatine phosphate). Creatine kinase isoenzymes play a central role in energy transduction in tissues with large, fluctuating energy demands, such as skeletal muscle, heart, brain and spermatozoa. This is Creatine kinase U-type, mitochondrial (CKMT1) from Sus scrofa (Pig).